The sequence spans 285 residues: MTALLIDGNALSKTLRAQAAERAAALTARGHRPGLAVILVGDNPASEVYVRNKIKACEDNGFFSQKDTYPATLSEADLLARIDELNRDPKIHGILVQLPLPAHIDSHKVIEAIAPEKDVDGFHVANAGALMTGKPLFRPCTPYGVMKMFAAHGIALQGANAVVIGRSNIVGKPMAMLLLEAGATVTICHSKTRDLAAHTRQADIIVAAVGKRNILTADMVKPGATVIDVGMNRDDAGKLCGDVDFAGVKEVAGYITPVPGGVGPMTITMLLINTLESAERAAAAA.

Residues 165–167 and Ser190 contribute to the NADP(+) site; that span reads GRS.

Belongs to the tetrahydrofolate dehydrogenase/cyclohydrolase family. In terms of assembly, homodimer.

The catalysed reaction is (6R)-5,10-methylene-5,6,7,8-tetrahydrofolate + NADP(+) = (6R)-5,10-methenyltetrahydrofolate + NADPH. The enzyme catalyses (6R)-5,10-methenyltetrahydrofolate + H2O = (6R)-10-formyltetrahydrofolate + H(+). Its pathway is one-carbon metabolism; tetrahydrofolate interconversion. Functionally, catalyzes the oxidation of 5,10-methylenetetrahydrofolate to 5,10-methenyltetrahydrofolate and then the hydrolysis of 5,10-methenyltetrahydrofolate to 10-formyltetrahydrofolate. The chain is Bifunctional protein FolD from Burkholderia multivorans (strain ATCC 17616 / 249).